Consider the following 186-residue polypeptide: Large ribosomal subunit protein uL6 (186 aa).

This sequence belongs to the universal ribosomal protein uL6 family. In terms of assembly, part of the 50S ribosomal subunit.

This protein binds to the 23S rRNA, and is important in its secondary structure. It is located near the subunit interface in the base of the L7/L12 stalk, and near the tRNA binding site of the peptidyltransferase center. This is Large ribosomal subunit protein uL6 from Sulfurisphaera tokodaii (strain DSM 16993 / JCM 10545 / NBRC 100140 / 7) (Sulfolobus tokodaii).